The primary structure comprises 183 residues: MLEWLNPVKGFGVTFHTMFKKVPTVEYPEVKAPTMPRFHGRHQLNRWPDGLEKCIGCELCAWACPADAIYVEAGDNTEEERYSPGERYGRVYQINYLRCILCGLCVEACPTRALTMTNEYELADDSRESLIYTKEQLLAPLQQGMEAPPHPMRLGETEKDYYRLGRDDNAAARADEQNSEAVQ.

4Fe-4S ferredoxin-type domains lie at 44-74 and 90-119; these read LNRW…VEAG and RVYQ…MTNE. [4Fe-4S] cluster contacts are provided by cysteine 54, cysteine 57, cysteine 60, cysteine 64, cysteine 99, cysteine 102, cysteine 105, and cysteine 109. A disordered region spans residues 143-183; it reads QGMEAPPHPMRLGETEKDYYRLGRDDNAAARADEQNSEAVQ. The span at 153 to 176 shows a compositional bias: basic and acidic residues; the sequence is RLGETEKDYYRLGRDDNAAARADE.

Belongs to the complex I 23 kDa subunit family. In terms of assembly, NDH-1 is composed of 14 different subunits. Subunits NuoA, H, J, K, L, M, N constitute the membrane sector of the complex. The cofactor is [4Fe-4S] cluster.

Its subcellular location is the cell membrane. It carries out the reaction a quinone + NADH + 5 H(+)(in) = a quinol + NAD(+) + 4 H(+)(out). Its function is as follows. NDH-1 shuttles electrons from NADH, via FMN and iron-sulfur (Fe-S) centers, to quinones in the respiratory chain. The immediate electron acceptor for the enzyme in this species is believed to be ubiquinone. Couples the redox reaction to proton translocation (for every two electrons transferred, four hydrogen ions are translocated across the cytoplasmic membrane), and thus conserves the redox energy in a proton gradient. The polypeptide is NADH-quinone oxidoreductase subunit I (Thermobifida fusca (strain YX)).